A 216-amino-acid chain; its full sequence is Glycerol uptake facilitator protein-like 6 (216 aa).

2 consecutive transmembrane segments (helical) span residues 5–25 and 30–50; these read LAEFLGTFMLVFLGTATVVIA and LAIGLAFGLAITVSAYAFGGI. The NPA 1 motif lies at 56–58; the sequence is NPA. Transmembrane regions (helical) follow at residues 72–92, 114–134, and 147–167; these read ADAIGYIIAQIIGAIVASAAV, IGSGMAFFVEALVTFLFLMVI, and FAGLTIGVTLAFLIIVALNLT. The short motif at 172-174 is the NPA 2 element; sequence NPA. The helical transmembrane segment at 191 to 213 threads the bilayer; that stretch reads LWVYILAPEVGAILAAFCARVMG.

This sequence belongs to the MIP/aquaporin (TC 1.A.8) family.

The protein localises to the cell membrane. Probable transporter that facilitates the transmembrane diffusion of an unknown substrate. Is not permeable to water, dihydroxyacetone, glycerol, urea, H(2)O(2) and D/L-lactic acid. The sequence is that of Glycerol uptake facilitator protein-like 6 from Lactiplantibacillus plantarum (strain ATCC BAA-793 / NCIMB 8826 / WCFS1) (Lactobacillus plantarum).